Consider the following 231-residue polypeptide: Lipoprotein-releasing system ATP-binding protein LolD (231 aa).

The ABC transporter domain occupies 6 to 231 (LKCQSVHKVY…VLAKVAPNSL (226 aa)). 42–49 (GASGSGKS) contributes to the ATP binding site.

Belongs to the ABC transporter superfamily. Lipoprotein translocase (TC 3.A.1.125) family. The complex is composed of two ATP-binding proteins (LolD) and two transmembrane proteins (LolC and LolE).

It is found in the cell inner membrane. Part of the ABC transporter complex LolCDE involved in the translocation of mature outer membrane-directed lipoproteins, from the inner membrane to the periplasmic chaperone, LolA. Responsible for the formation of the LolA-lipoprotein complex in an ATP-dependent manner. This is Lipoprotein-releasing system ATP-binding protein LolD from Hahella chejuensis (strain KCTC 2396).